The following is a 313-amino-acid chain: Expansin-like A4 (313 aa).

A signal peptide spans 1–30 (MDDNGDVHFCHRATAVVALLLLHLVVVANA). The region spanning 59–173 (GGACGFGAAP…RRIPCEYRES (115 aa)) is the Expansin-like EG45 domain. N-linked (GlcNAc...) asparagine glycosylation is present at Asn124. Positions 188-281 (THLAIRFLYQ…DWRPGEVYDT (94 aa)) constitute an Expansin-like CBD domain.

This sequence belongs to the expansin family. Expansin-like A subfamily.

It localises to the secreted. This Oryza sativa subsp. japonica (Rice) protein is Expansin-like A4 (EXLA4).